The chain runs to 107 residues: UPF0145 protein BT_3410 (107 aa).

It belongs to the UPF0145 family.

This is UPF0145 protein BT_3410 from Bacteroides thetaiotaomicron (strain ATCC 29148 / DSM 2079 / JCM 5827 / CCUG 10774 / NCTC 10582 / VPI-5482 / E50).